The primary structure comprises 589 residues: MEGSWSYKLLYVFLCIVLGILYGIANPILLAQGLGFIFPITSSNGRAVDSIYSLIYPTNLNVFIRLTIVSVTVFVAYALIFVFNVAQNYVGIKLYQQTCATLRWKAYLKMQSMSTSFFDTQNNGDLMSRLTNDMYNIDNLFTQAGGQAIQSLFNILTTSVLIFLLSPVIALISLSILATLITFSFAFLKKSKTSYSQVQNNLGDMSGYIEEVLTNHKVVHVLKLQEIMIKDFDQYNKSMIKPTVRGNTYSIFLFSWFGFISNITYLVSISIATAFSVNSIPSFGISVINYSFMLSYIASLRQITLALDQIFTLWNLVQLGVVSAERVFKVLDLNVEKDTATIDKLPDIKGNIRFENVAFGYNKDKPTLTGINFSVKHGDVVAIVGPTGAGKSTIINLLMKFYKPFEGKIYMDNFEISDVTKKAWREKISIVLQDSFLFSGTIKENIRLGRQDATDDEIIAACKTANAHDFIMRLPKGYDTYISNKADYLSVGERQLLTIARAVIRNAPVLLLDEATSSVDVHSEKLIQESIGRLMKNKTSFIISHRLSIIRDATLIMVINDGKVLEMGNHDQLMKQNGFYARLKQSSVR.

6 helical membrane-spanning segments follow: residues 9 to 29 (LLYVFLCIVLGILYGIANPIL), 66 to 86 (LTIVSVTVFVAYALIFVFNVA), 161 to 181 (LIFLLSPVIALISLSILATLI), 251 to 271 (IFLFSWFGFISNITYLVSISI), 280 to 300 (IPSFGISVINYSFMLSYIASL), and 303 to 323 (ITLALDQIFTLWNLVQLGVVS). Positions 9–319 (LLYVFLCIVL…IFTLWNLVQL (311 aa)) constitute an ABC transmembrane type-1 domain. In terms of domain architecture, ABC transporter spans 352 to 586 (IRFENVAFGY…NGFYARLKQS (235 aa)). ATP is bound at residue 385 to 392 (GPTGAGKS).

Belongs to the ABC transporter superfamily.

The protein localises to the cell membrane. The polypeptide is Putative ABC transporter ATP-binding protein MG015 (Mycoplasma genitalium (strain ATCC 33530 / DSM 19775 / NCTC 10195 / G37) (Mycoplasmoides genitalium)).